The following is a 145-amino-acid chain: Deoxyuridine 5'-triphosphate nucleotidohydrolase (145 aa).

Substrate contacts are provided by residues 65-67 (RSG), Asn-78, 82-84 (TID), and Lys-92.

The protein belongs to the dUTPase family. The cofactor is Mg(2+).

It catalyses the reaction dUTP + H2O = dUMP + diphosphate + H(+). The protein operates within pyrimidine metabolism; dUMP biosynthesis; dUMP from dCTP (dUTP route): step 2/2. This enzyme is involved in nucleotide metabolism: it produces dUMP, the immediate precursor of thymidine nucleotides and it decreases the intracellular concentration of dUTP so that uracil cannot be incorporated into DNA. This Syntrophomonas wolfei subsp. wolfei (strain DSM 2245B / Goettingen) protein is Deoxyuridine 5'-triphosphate nucleotidohydrolase.